The sequence spans 72 residues: Alpha-elapitoxin-Dv2b (72 aa).

Cystine bridges form between cysteine 3/cysteine 21, cysteine 14/cysteine 42, cysteine 27/cysteine 31, cysteine 46/cysteine 57, and cysteine 58/cysteine 63.

This sequence belongs to the three-finger toxin family. Long-chain subfamily. Type II alpha-neurotoxin sub-subfamily. Neurotoxin 4.7.3 differs from 4.9.3 only in that Trp-26 has undergone partial photooxidation. In terms of tissue distribution, expressed by the venom gland.

It is found in the secreted. Functionally, binds with high affinity to muscular (alpha-1/CHRNA1) and neuronal (alpha-7/CHRNA7) nicotinic acetylcholine receptor (nAChR) and inhibits acetylcholine from binding to the receptor, thereby impairing neuromuscular and neuronal transmission. This Dendroaspis viridis (Western green mamba) protein is Alpha-elapitoxin-Dv2b.